The following is a 658-amino-acid chain: DNA ligase (658 aa).

NAD(+)-binding positions include 32–36 (DAVYD) and 81–82 (SL). Catalysis depends on Lys-112, which acts as the N6-AMP-lysine intermediate. The NAD(+) site is built by Arg-133, Glu-167, and Lys-306. Zn(2+) is bound by residues Cys-400, Cys-403, Cys-416, and Cys-421. The region spanning 577–658 (ESSSVFNNKT…LKRLKKLDQN (82 aa)) is the BRCT domain.

This sequence belongs to the NAD-dependent DNA ligase family. LigA subfamily. Mg(2+) is required as a cofactor. Requires Mn(2+) as cofactor.

It catalyses the reaction NAD(+) + (deoxyribonucleotide)n-3'-hydroxyl + 5'-phospho-(deoxyribonucleotide)m = (deoxyribonucleotide)n+m + AMP + beta-nicotinamide D-nucleotide.. In terms of biological role, DNA ligase that catalyzes the formation of phosphodiester linkages between 5'-phosphoryl and 3'-hydroxyl groups in double-stranded DNA using NAD as a coenzyme and as the energy source for the reaction. It is essential for DNA replication and repair of damaged DNA. The sequence is that of DNA ligase from Helicobacter pylori (strain G27).